We begin with the raw amino-acid sequence, 125 residues long: Large ribosomal subunit protein bL19 (125 aa).

The protein belongs to the bacterial ribosomal protein bL19 family.

This protein is located at the 30S-50S ribosomal subunit interface and may play a role in the structure and function of the aminoacyl-tRNA binding site. This is Large ribosomal subunit protein bL19 from Ehrlichia chaffeensis (strain ATCC CRL-10679 / Arkansas).